The primary structure comprises 199 residues: Thymidine kinase (199 aa).

Residues 23–30 (GSMFSGKT) and 95–98 (DEAQ) each bind ATP. Residue E96 is the Proton acceptor of the active site. Positions 152, 155, 184, and 187 each coordinate Zn(2+).

The protein belongs to the thymidine kinase family. As to quaternary structure, homotetramer.

Its subcellular location is the cytoplasm. It catalyses the reaction thymidine + ATP = dTMP + ADP + H(+). The polypeptide is Thymidine kinase (Bacteroides thetaiotaomicron (strain ATCC 29148 / DSM 2079 / JCM 5827 / CCUG 10774 / NCTC 10582 / VPI-5482 / E50)).